Here is a 401-residue protein sequence, read N- to C-terminus: Deubiquitinase and deneddylase Dub1 (401 aa).

Residues 1–11 are compositionally biased toward polar residues; sequence MLSPTNSTSKT. The disordered stretch occupies residues 1-24; the sequence is MLSPTNSTSKTAPVPPRDSSKPVL. Residues 40-60 traverse the membrane as a helical segment; sequence TALAVLLVVVTLGLILLFYSF. The interval 77–130 is disordered; sequence KEQPTISIPVPLPSPPLAVPRPSTPPPPVISRPSTPSAPKPSTPPPLLPKAPKP. Positions 86-128 are enriched in pro residues; the sequence is VPLPSPPLAVPRPSTPPPPVISRPSTPSAPKPSTPPPLLPKAP. Residues His-275, Asp-292, and Cys-345 contribute to the active site.

This sequence belongs to the peptidase C48 family. As to quaternary structure, binds to host NFKBIA.

Its subcellular location is the secreted. The protein resides in the host cell. It is found in the membrane. In terms of biological role, effector proteins function to alter host cell physiology and promote bacterial survival in host tissues. This protease possesses deubiquitinating and deneddylating activities. Impairs ubiquitination and degradation of NF-kappa-B inhibitor alpha (NFKBIA), thereby preventing NF-kappa-B activation. The sequence is that of Deubiquitinase and deneddylase Dub1 (cdu1) from Chlamydia trachomatis serovar L2 (strain ATCC VR-902B / DSM 19102 / 434/Bu).